A 63-amino-acid polypeptide reads, in one-letter code: Large ribosomal subunit protein uL29 (63 aa).

It belongs to the universal ribosomal protein uL29 family.

The sequence is that of Large ribosomal subunit protein uL29 from Alcanivorax borkumensis (strain ATCC 700651 / DSM 11573 / NCIMB 13689 / SK2).